The chain runs to 107 residues: Protein Rev (107 aa).

Residue Ser-5 is modified to Phosphoserine; by host CK2. A homomultimerization region spans residues 18–26 (AIKILYQSN). Disordered regions lie at residues 24-48 (QSNP…WRAR) and 82-107 (HLDC…VGRS). The Nuclear localization signal and RNA-binding (RRE) motif lies at 34–50 (TRQARRNRRRRWRARQR). Residues 36 to 48 (QARRNRRRRWRAR) show a composition bias toward basic residues. The short motif at 73–84 (LQLPPLERLHLD) is the Nuclear export signal and binding to XPO1 element. Residues 88–101 (DSGTSGTQQPQGTE) are compositionally biased toward polar residues. Ser-92 carries the post-translational modification Phosphoserine; by host.

The protein belongs to the HIV-1 REV protein family. Homomultimer; when bound to the RRE. Multimeric assembly is essential for activity and may involve XPO1. Binds to human KPNB1, XPO1, TNPO1, RANBP5 and IPO7. Interacts with the viral Integrase. Interacts with human KHDRBS1. Interacts with human NAP1; this interaction decreases Rev multimerization and stimulates its activity. Interacts with human DEAD-box helicases DDX3 and DDX24; these interactions may serve for viral RNA export to the cytoplasm and packaging, respectively. Interacts with human PSIP1; this interaction may inhibit HIV-1 DNA integration by promoting dissociation of the Integrase-LEDGF/p75 complex. In terms of processing, asymmetrically arginine dimethylated at one site by host PRMT6. Methylation impairs the RNA-binding activity and export of viral RNA from the nucleus to the cytoplasm. Phosphorylated by protein kinase CK2. Presence of, and maybe binding to the N-terminus of the regulatory beta subunit of CK2 is necessary for CK2-mediated Rev's phosphorylation.

The protein localises to the host nucleus. It is found in the host nucleolus. The protein resides in the host cytoplasm. Escorts unspliced or incompletely spliced viral pre-mRNAs (late transcripts) out of the nucleus of infected cells. These pre-mRNAs carry a recognition sequence called Rev responsive element (RRE) located in the env gene, that is not present in fully spliced viral mRNAs (early transcripts). This function is essential since most viral proteins are translated from unspliced or partially spliced pre-mRNAs which cannot exit the nucleus by the pathway used by fully processed cellular mRNAs. Rev itself is translated from a fully spliced mRNA that readily exits the nucleus. Rev's nuclear localization signal (NLS) binds directly to KPNB1/Importin beta-1 without previous binding to KPNA1/Importin alpha-1. KPNB1 binds to the GDP bound form of RAN (Ran-GDP) and targets Rev to the nucleus. In the nucleus, the conversion from Ran-GDP to Ran-GTP dissociates Rev from KPNB1 and allows Rev's binding to the RRE in viral pre-mRNAs. Rev multimerization on the RRE via cooperative assembly exposes its nuclear export signal (NES) to the surface. Rev can then form a complex with XPO1/CRM1 and Ran-GTP, leading to nuclear export of the complex. Conversion from Ran-GTP to Ran-GDP mediates dissociation of the Rev/RRE/XPO1/RAN complex, so that Rev can return to the nucleus for a subsequent round of export. Beside KPNB1, also seems to interact with TNPO1/Transportin-1, RANBP5/IPO5 and IPO7/RANBP7 for nuclear import. The nucleoporin-like HRB/RIP is an essential cofactor that probably indirectly interacts with Rev to release HIV RNAs from the perinuclear region to the cytoplasm. In Human immunodeficiency virus type 1 group M subtype G (isolate SE6165) (HIV-1), this protein is Protein Rev.